The sequence spans 234 residues: Ribonuclease HII (234 aa).

Residues 16-207 (ALVAGVDEAG…VRRMLTPKAI (192 aa)) form the RNase H type-2 domain. D22, E23, and D115 together coordinate a divalent metal cation.

It belongs to the RNase HII family. Mn(2+) is required as a cofactor. Mg(2+) serves as cofactor.

The protein resides in the cytoplasm. The catalysed reaction is Endonucleolytic cleavage to 5'-phosphomonoester.. Functionally, endonuclease that specifically degrades the RNA of RNA-DNA hybrids. The sequence is that of Ribonuclease HII from Xylella fastidiosa (strain M12).